A 340-amino-acid chain; its full sequence is Sterol-4-alpha-carboxylate 3-dehydrogenase erg26, decarboxylating (340 aa).

Tyrosine 144 acts as the Proton acceptor in catalysis. Position 148 (lysine 148) interacts with NAD(+).

This sequence belongs to the 3-beta-HSD family. As to quaternary structure, heterotetramer of erg25, erg26, erg27 and erg28. Erg28 acts as a scaffold to tether erg27 and other 4,4-demethylation-related enzymes, forming a demethylation enzyme complex, in the endoplasmic reticulum.

Its subcellular location is the endoplasmic reticulum membrane. It catalyses the reaction 4beta-methylzymosterol-4alpha-carboxylate + NADP(+) = 3-dehydro-4-methylzymosterol + CO2 + NADPH. Its pathway is steroid biosynthesis; zymosterol biosynthesis; zymosterol from lanosterol: step 4/6. The protein operates within steroid metabolism; ergosterol biosynthesis. In terms of biological role, sterol-4-alpha-carboxylate 3-dehydrogenase; part of the third module of ergosterol biosynthesis pathway that includes by the late steps of the pathway. Erg26 is a catalytic component of the C-4 demethylation complex that catalyzes the oxidative decarboxylation that results in a reduction of the 3-beta-hydroxy group at the C-3 carbon to an oxo group. The third module or late pathway involves the ergosterol synthesis itself through consecutive reactions that mainly occur in the endoplasmic reticulum (ER) membrane. Firstly, the squalene synthase erg9 catalyzes the condensation of 2 farnesyl pyrophosphate moieties to form squalene, which is the precursor of all steroids. Secondly, squalene is converted into lanosterol by the consecutive action of the squalene epoxidase erg1 and the lanosterol synthase erg7. The lanosterol 14-alpha-demethylase erg11/cyp1 catalyzes C14-demethylation of lanosterol to produce 4,4'-dimethyl cholesta-8,14,24-triene-3-beta-ol. In the next steps, a complex process involving various demethylation, reduction and desaturation reactions catalyzed by the C-14 reductase erg24 and the C-4 demethylation complex erg25-erg26-erg27 leads to the production of zymosterol. Erg28 likely functions in the C-4 demethylation complex reaction by tethering erg26 and Erg27 to the endoplasmic reticulum or to facilitate interaction between these proteins. Then, the sterol 24-C-methyltransferase erg6 catalyzes the methyl transfer from S-adenosyl-methionine to the C-24 of zymosterol to form fecosterol. The C-8 sterol isomerase erg2 catalyzes the reaction which results in unsaturation at C-7 in the B ring of sterols and thus converts fecosterol to episterol. The sterol-C5-desaturases erg31 and erg32 then catalyze the introduction of a C-5 double bond in the B ring to produce 5-dehydroepisterol. The C-22 sterol desaturase erg5 further converts 5-dehydroepisterol into ergosta-5,7,22,24(28)-tetraen-3beta-ol by forming the C-22(23) double bond in the sterol side chain. Finally, ergosta-5,7,22,24(28)-tetraen-3beta-ol is substrate of the C-24(28) sterol reductase erg4 to produce ergosterol. In the genus Schizosaccharomyces, a second route exists between lanosterol and fecosterol, via the methylation of lanosterol to eburicol by erg6, followed by C14-demethylation by erg11/cyp1 and C4-demethylation by the demethylation complex erg25-erg26-erg27. This chain is Sterol-4-alpha-carboxylate 3-dehydrogenase erg26, decarboxylating, found in Schizosaccharomyces pombe (strain 972 / ATCC 24843) (Fission yeast).